Reading from the N-terminus, the 1227-residue chain is Pre-mRNA-splicing factor ATP-dependent RNA helicase PRP16 (1227 aa).

At Gly2 the chain carries N-acetylglycine. At Ser56 the chain carries Phosphoserine. The span at 60–89 (REREEKDDGEDKKKSKVSSYKDWEESKDDQ) shows a compositional bias: basic and acidic residues. A disordered region spans residues 60–320 (REREEKDDGE…ERQQWEDDQR (261 aa)). The residue at position 117 (Thr117) is a Phosphothreonine. Residues 128-201 (FWERSRQRER…SRRNEPESPR (74 aa)) show a composition bias toward basic and acidic residues. A phosphoserine mark is found at Ser199 and Ser224. Residues 222-239 (YGSSRRSQWESPSPTPSY) are compositionally biased toward polar residues. Residues 240–263 (RDSERSHRLSTRDRDRSVRGKYSD) are compositionally biased toward basic and acidic residues. The residue at position 260 (Lys260) is an N6-acetyllysine. Residues 300-310 (GEEGISFDTEE) show a composition bias toward acidic residues. A compositionally biased stretch (basic and acidic residues) spans 311–320 (ERQQWEDDQR). Glycyl lysine isopeptide (Lys-Gly) (interchain with G-Cter in SUMO2) cross-links involve residues Lys482, Lys483, and Lys504. The 164-residue stretch at 542–705 (LTIIRDNSIV…FGNVPIFHIP (164 aa)) folds into the Helicase ATP-binding domain. 555 to 562 (GETGSGKT) contacts ATP. Residues 652-655 (DEAH) carry the DEAH box motif. A Helicase C-terminal domain is found at 727–902 (AVKQSLQVHL…NVVLLLKSLG (176 aa)). The disordered stretch occupies residues 1155–1227 (GKSRQENRRR…PRRTPARFGL (73 aa)). Composition is skewed to basic and acidic residues over residues 1157 to 1169 (SRQE…KEEA) and 1181 to 1194 (EQLR…EKRS). Lys1166 is covalently cross-linked (Glycyl lysine isopeptide (Lys-Gly) (interchain with G-Cter in SUMO2)). Ser1194 is modified (phosphoserine).

It belongs to the DEAD box helicase family. DEAH subfamily. PRP16 sub-subfamily. In terms of assembly, identified in the spliceosome C complex.

Its subcellular location is the nucleus. It catalyses the reaction ATP + H2O = ADP + phosphate + H(+). Functionally, probable ATP-binding RNA helicase. Involved in pre-mRNA splicing as component of the spliceosome. This chain is Pre-mRNA-splicing factor ATP-dependent RNA helicase PRP16 (DHX38), found in Homo sapiens (Human).